Here is a 708-residue protein sequence, read N- to C-terminus: MTKDLNTLVSELPEIYQTIFGHPEWDGDAARDCNQRLDLITEQYDNLSRALGRPLNVLDLGCAQGFFSLSLASKGATIVGIDFQQENINVCRALAEENPDFAAEFRVGRIEEVIAALEEGEFDLAIGLSVFHHIVHLHGIDEVKRLLSRLADVTQAVILELAVKEEPFYWGVSQPDDPRELIEQCAFYRLIGEFDTHLSPVPRPMYLVSNHRVLINDFNQPFQHWQNQPYAGAGLAHKRSRRYFFGEDYVCKFFYYDMPHGILTAEESQRNKYELHNEIKFLTQPPAGFDAPAVLAHGENAQSGWLVMEKLPGRLLSDMLAAGEEIDREKILGSLLRSLAALEKQGFWHDDVRPWNVMVDARQHARLIDFGSIVTTPQDCSWPTNLVQSFFVFVNELFAENKSWNGFWRSAPVHPFNLPQPWSNWLYAVWQEPVERWNFVLLLALFEKKAKLPSAEQQRGATEQWIIAQETVLLELQSRVRNESAGSEALRGQIHTLEQQMAQLQSAQDAFVEKAQQQVEVSHELTWLGENMEQLAALLQTAQAHAQADVQPELPPETAELLQRLEAANREIHHLSNENQQLRQEIEKIHRSRSWRMTKGYRYLGLQIHLLRQYGFVQRCKHFIKRVLRFVFSFMRKHPQVKHTAVNGLHKLGLYQPAYRLYRRMNPLPHSQYQADAQILSQTELQVMHPELLPPEVYEIYLKLTKNK.

Residues 1–210 are methyltransferase; that stretch reads MTKDLNTLVS…VPRPMYLVSN (210 aa). Residues 16 to 17, Arg36, Gly61, 82 to 87, 108 to 111, and Leu128 contribute to the S-adenosyl-L-methionine site; these read YQ, DFQQEN, and GRIE. The interval 211 to 459 is kinase; the sequence is HRVLINDFNQ…AKLPSAEQQR (249 aa). ATP is bound by residues Pro229, His237, 241-243, Lys252, Glu274, 309-311, Met358, and Asp369; these read RRY and EKL. Positions 485–594 form a coiled coil; that stretch reads AGSEALRGQI…EIEKIHRSRS (110 aa). Positions 601 to 669 are required for membrane-binding; the sequence is YRYLGLQIHL…RLYRRMNPLP (69 aa). A required for localizing WbdA to the membrane region spans residues 687-708; the sequence is VMHPELLPPEVYEIYLKLTKNK.

Belongs to the WbdD family. Homotrimer in solution. Interacts with WbdA.

It is found in the cell inner membrane. It carries out the reaction 3-O-phospho-alpha-D-Man-(1-&gt;2)-alpha-D-Man-(1-&gt;2)-[alpha-D-Man-(1-&gt;3)-alpha-D-Man-(1-&gt;3)-alpha-D-Man-(1-&gt;2)-alpha-D-Man-(1-&gt;2)](n)-alpha-D-Man-(1-&gt;3)-alpha-D-Man-(1-&gt;3)-alpha-D-Man-(1-&gt;3)-alpha-D-GlcNAc-di-trans,octa-cis-undecaprenyl diphosphate + S-adenosyl-L-methionine = 3-O-methylphospho-alpha-D-Man-(1-&gt;2)-alpha-D-Man-(1-&gt;2)-[alpha-D-Man-(1-&gt;3)-alpha-D-Man-(1-&gt;3)-alpha-D-Man-(1-&gt;2)-alpha-D-Man-(1-&gt;2)](n)-alpha-D-Man-(1-&gt;3)-alpha-D-Man-(1-&gt;3)-alpha-D-Man-(1-&gt;3)-alpha-D-GlcNAc-di-trans,octa-cis-undecaprenyl diphosphate + S-adenosyl-L-homocysteine. The enzyme catalyses alpha-D-Man-(1-&gt;2)-alpha-D-Man-(1-&gt;2)-[alpha-D-Man-(1-&gt;3)-alpha-D-Man-(1-&gt;3)-alpha-D-Man-(1-&gt;2)-alpha-D-Man-(1-&gt;2)](n)-alpha-D-Man-(1-&gt;3)-alpha-D-Man-(1-&gt;3)-alpha-D-Man-(1-&gt;3)-alpha-D-GlcNAc-di-trans,octa-cis-undecaprenyl diphosphate + ATP = 3-O-phospho-alpha-D-Man-(1-&gt;2)-alpha-D-Man-(1-&gt;2)-[alpha-D-Man-(1-&gt;3)-alpha-D-Man-(1-&gt;3)-alpha-D-Man-(1-&gt;2)-alpha-D-Man-(1-&gt;2)](n)-alpha-D-Man-(1-&gt;3)-alpha-D-Man-(1-&gt;3)-alpha-D-Man-(1-&gt;3)-alpha-D-GlcNAc-di-trans,octa-cis-undecaprenyl diphosphate + ADP + H(+). The protein operates within bacterial outer membrane biogenesis; LPS O-antigen biosynthesis. Its function is as follows. Regulates the length of the LPS O-antigen polysaccharide chain. Stops the polymerization of the chain by phosphorylating and then methylating the phosphate on the terminal sugar. This terminal modification is essential for export of the O-antigen across the inner membrane. WbdD is also required for correct localization of the WbdA mannosyltransferase. The polypeptide is O-antigen chain terminator bifunctional methyltransferase/kinase WbdD (Escherichia coli).